Here is a 387-residue protein sequence, read N- to C-terminus: Decapping nuclease RAI1 (387 aa).

E172 is a binding site for a divalent metal cation. Phosphoserine is present on S198. E221 serves as a coordination point for substrate. D223, E241, and L242 together coordinate a divalent metal cation. Substrate contacts are provided by K243 and Q267. Residues 273-387 (IPRIIYGFKD…GFKEWRKSLK (115 aa)) are interaction with RAT1.

Belongs to the DXO/Dom3Z family. As to quaternary structure, interacts with RAT1, RTT103 and pre-60S ribosomal subunits. Interacts with RAT1; the interaction is direct, stabilizes RAT1 protein structure and stimulates its exoribonuclease activity. The interaction also stimulates RAI1 pyrophosphohydrolase activity, probably by recruiting it to mRNA substrates. The cofactor is a divalent metal cation.

Its subcellular location is the nucleus. The enzyme catalyses a 5'-end NAD(+)-phospho-ribonucleoside in mRNA + H2O = a 5'-end phospho-ribonucleoside in mRNA + NAD(+) + H(+). It carries out the reaction a 5'-end (N(7)-methyl 5'-triphosphoguanosine)-ribonucleoside-ribonucleotide in mRNA + H2O = a (N(7)-methyl 5'-triphosphoguanosine)-nucleoside + a 5'-end phospho-ribonucleoside in mRNA + H(+). It catalyses the reaction a 5'-end triphospho-ribonucleoside in mRNA + H2O = a 5'-end phospho-ribonucleoside in mRNA + diphosphate + H(+). Decapping enzyme for NAD-capped RNAs: specifically hydrolyzes the nicotinamide adenine dinucleotide (NAD) cap from a subset of RNAs by removing the entire NAD moiety from the 5'-end of an NAD-capped RNA. The NAD-cap is present at the 5'-end of some RNAs and snoRNAs. In contrast to the canonical 5'-end N7 methylguanosine (m7G) cap, the NAD cap promotes mRNA decay. Also acts as a non-canonical decapping enzyme that removes the entire cap structure of m7G capped or incompletely capped RNAs. Has decapping activity toward incomplete 5'-end m7G cap mRNAs such as unmethylated 5'-end-capped RNA (cap0), while it has no activity toward 2'-O-ribose methylated m7G cap (cap1). Also possesses RNA 5'-pyrophosphohydrolase activity by hydrolyzing the 5'-end triphosphate to release pyrophosphates. Stimulates exoribonuclease activity of RAT1, allowing it to degrade RNAs with stable secondary structure more effectively. Required for the processing of nuclear mRNA and rRNA precursors. May promote termination of transcription by RNA polymerase II. The polypeptide is Decapping nuclease RAI1 (Saccharomyces cerevisiae (strain ATCC 204508 / S288c) (Baker's yeast)).